Here is a 284-residue protein sequence, read N- to C-terminus: L-ribulose-5-phosphate 3-epimerase UlaE (284 aa).

This sequence belongs to the L-ribulose-5-phosphate 3-epimerase family.

It carries out the reaction L-ribulose 5-phosphate = L-xylulose 5-phosphate. It participates in cofactor degradation; L-ascorbate degradation; D-xylulose 5-phosphate from L-ascorbate: step 3/4. In terms of biological role, catalyzes the isomerization of L-xylulose-5-phosphate to L-ribulose-5-phosphate. Is involved in the anaerobic L-ascorbate utilization. This is L-ribulose-5-phosphate 3-epimerase UlaE from Escherichia coli (strain ATCC 8739 / DSM 1576 / NBRC 3972 / NCIMB 8545 / WDCM 00012 / Crooks).